Here is a 280-residue protein sequence, read N- to C-terminus: Transcription factor MYB46 (280 aa).

2 HTH myb-type domains span residues 15-67 (VKKM…INYL) and 68-122 (RPDL…KKRL). 2 DNA-binding regions (H-T-H motif) span residues 43 to 67 (WSDVAKNAGLQRCGKSCRLRWINYL) and 95 to 118 (WSQIAARLPGRTDNEIKNFWNSTI). Residues 129-150 (SNLINNSSSSPNTASDSSSNSA) are disordered.

Expressed at low levels in stems and siliques, specifically in xylem.

It localises to the nucleus. Its function is as follows. Transcription activator. Involved in the regulation of secondary wall biosynthesis in fibers and vessels. Transcription activator of the mannan synthase CSLA9 that recognizes and binds to the DNA consensus sequence 5'-[AG][GT]T[AT]GGT[GA]-3' cis-regulatory element of CSLA9 promoter. Transcription factor that acts as a molecular switch in the NAC012/SND1-mediated transcriptional network regulating secondary wall biosynthesis. Is directly activated by NAC012/SND1. Functions redundantly with MYB83 in the transcriptional regulatory cascade leading to secondary wall formation in fibers and vessels. Transcription activator that binds to the DNA consensus sequence 5'-ACC[AT]A[AC][TC]-3', designated as the secondary wall MYB-responsive element (SMRE). Regulates directly numerous transcription factors and a number of genes involved in secondary wall biosynthesis that contain SMRE elements in their promoters. Is an obligate component of the transcriptional regulatory complex toward the commitment of secondary wall cellulose synthesis. Is required for functional expression of the three secondary wall CESA genes, CESA4, CESA7 and CESA8. This is Transcription factor MYB46 from Arabidopsis thaliana (Mouse-ear cress).